Consider the following 383-residue polypeptide: Putative F-box/kelch-repeat protein At1g62270 (383 aa).

One can recognise an F-box domain in the interval threonine 6–methionine 51. 3 Kelch repeats span residues lysine 110 to tyrosine 158, serine 160 to asparagine 211, and threonine 349 to isoleucine 383.

This is Putative F-box/kelch-repeat protein At1g62270 from Arabidopsis thaliana (Mouse-ear cress).